Reading from the N-terminus, the 206-residue chain is MNNDFNLLILSGPSGAGKSTLTKYLQEKIPKTHFSLSTTTRKPREGEVDGLHYNFVSEEEFKQGIEKGQFLEWAIVHNHYYGTSKIPVEKALKEGKIVIFDIDVQGHEILKKHYPNACSVFISTKNQEILKERLLLRGTDSKETIEKRLINAYKEMQCLESFDYLIINEDLEKSKEIILSIAKTLVHRLKAFNFEKICKAWKNESL.

The region spanning 5-183 (FNLLILSGPS…SKEIILSIAK (179 aa)) is the Guanylate kinase-like domain. ATP is bound at residue 12–19 (GPSGAGKS).

It belongs to the guanylate kinase family.

Its subcellular location is the cytoplasm. The enzyme catalyses GMP + ATP = GDP + ADP. In terms of biological role, essential for recycling GMP and indirectly, cGMP. This is Guanylate kinase (gmk) from Helicobacter pylori (strain J99 / ATCC 700824) (Campylobacter pylori J99).